We begin with the raw amino-acid sequence, 62 residues long: Large ribosomal subunit protein uL30 (62 aa).

This sequence belongs to the universal ribosomal protein uL30 family. As to quaternary structure, part of the 50S ribosomal subunit.

This chain is Large ribosomal subunit protein uL30, found in Polynucleobacter asymbioticus (strain DSM 18221 / CIP 109841 / QLW-P1DMWA-1) (Polynucleobacter necessarius subsp. asymbioticus).